A 199-amino-acid chain; its full sequence is Lysine exporter LysE (199 aa).

Transmembrane regions (helical) follow at residues 6 to 26, 42 to 62, 68 to 88, 144 to 164, and 178 to 198; these read VVGF…NAFV, LCTV…GALI, ALNV…LLAA, WLFG…LGFG, and WRIL…SLTV.

It belongs to the LysE/ArgO transporter (TC 2.A.75) family.

It is found in the cell inner membrane. In terms of biological role, catalyzes the efflux of L-lysine. In Mycobacterium bovis (strain ATCC BAA-935 / AF2122/97), this protein is Lysine exporter LysE.